The sequence spans 539 residues: CTP synthase (539 aa).

The interval 1–267 (MTKFIFVTGG…DDLVIKRLDL (267 aa)) is amidoligase domain. Serine 13 serves as a coordination point for CTP. Position 13 (serine 13) interacts with UTP. 14 to 19 (SLGKGI) is a binding site for ATP. Residue tyrosine 54 participates in L-glutamine binding. Aspartate 71 serves as a coordination point for ATP. Mg(2+) is bound by residues aspartate 71 and glutamate 141. Residues 148-150 (DIE), 188-193 (KTKPTQ), and lysine 224 each bind CTP. UTP-binding positions include 188–193 (KTKPTQ) and lysine 224. Residue 240–242 (RDA) coordinates ATP. The 243-residue stretch at 293-535 (TIGLVGKYVS…IEAANKYKEA (243 aa)) folds into the Glutamine amidotransferase type-1 domain. Glycine 355 lines the L-glutamine pocket. Catalysis depends on cysteine 382, which acts as the Nucleophile; for glutamine hydrolysis. L-glutamine contacts are provided by residues 383 to 386 (LGMQ), glutamate 406, and arginine 463. Active-site residues include histidine 508 and glutamate 510.

Belongs to the CTP synthase family. Homotetramer.

The enzyme catalyses UTP + L-glutamine + ATP + H2O = CTP + L-glutamate + ADP + phosphate + 2 H(+). The catalysed reaction is L-glutamine + H2O = L-glutamate + NH4(+). It carries out the reaction UTP + NH4(+) + ATP = CTP + ADP + phosphate + 2 H(+). It functions in the pathway pyrimidine metabolism; CTP biosynthesis via de novo pathway; CTP from UDP: step 2/2. Allosterically activated by GTP, when glutamine is the substrate; GTP has no effect on the reaction when ammonia is the substrate. The allosteric effector GTP functions by stabilizing the protein conformation that binds the tetrahedral intermediate(s) formed during glutamine hydrolysis. Inhibited by the product CTP, via allosteric rather than competitive inhibition. Functionally, catalyzes the ATP-dependent amination of UTP to CTP with either L-glutamine or ammonia as the source of nitrogen. Regulates intracellular CTP levels through interactions with the four ribonucleotide triphosphates. This is CTP synthase from Staphylococcus carnosus (strain TM300).